We begin with the raw amino-acid sequence, 292 residues long: Diaminopimelate epimerase (292 aa).

The substrate site is built by asparagine 13, glutamine 46, and asparagine 66. Residue cysteine 75 is the Proton donor of the active site. Substrate contacts are provided by residues 76–77 (GN), asparagine 170, asparagine 203, and 221–222 (ER). The Proton acceptor role is filled by cysteine 230. Substrate is bound at residue 231 to 232 (GT).

This sequence belongs to the diaminopimelate epimerase family. Homodimer.

Its subcellular location is the cytoplasm. It carries out the reaction (2S,6S)-2,6-diaminopimelate = meso-2,6-diaminopimelate. It functions in the pathway amino-acid biosynthesis; L-lysine biosynthesis via DAP pathway; DL-2,6-diaminopimelate from LL-2,6-diaminopimelate: step 1/1. Its function is as follows. Catalyzes the stereoinversion of LL-2,6-diaminopimelate (L,L-DAP) to meso-diaminopimelate (meso-DAP), a precursor of L-lysine and an essential component of the bacterial peptidoglycan. In Acidovorax ebreus (strain TPSY) (Diaphorobacter sp. (strain TPSY)), this protein is Diaminopimelate epimerase.